Consider the following 82-residue polypeptide: UPF0235 protein Pden_2174 (82 aa).

Belongs to the UPF0235 family.

In Paracoccus denitrificans (strain Pd 1222), this protein is UPF0235 protein Pden_2174.